Reading from the N-terminus, the 309-residue chain is Protein FdhE (309 aa).

This sequence belongs to the FdhE family.

It is found in the cytoplasm. Necessary for formate dehydrogenase activity. This is Protein FdhE from Escherichia coli O45:K1 (strain S88 / ExPEC).